Here is a 148-residue protein sequence, read N- to C-terminus: Large ribosomal subunit protein uL15 (148 aa).

Positions 1–30 (MPSRLRKTRKLRGHVSHGHGRIGKHRKHPG) are enriched in basic residues. The tract at residues 1-37 (MPSRLRKTRKLRGHVSHGHGRIGKHRKHPGGRGNAGG) is disordered. Residue His39 is modified to (3S)-3-hydroxyhistidine. Lys47 and Lys55 each carry N6-acetyllysine. Phosphoserine is present on Ser68. At Lys110 the chain carries N6-acetyllysine.

The protein belongs to the universal ribosomal protein uL15 family. As to quaternary structure, component of the large ribosomal subunit. In terms of processing, hydroxylated on His-39 by MINA.

It is found in the cytoplasm. Functionally, component of the large ribosomal subunit. The ribosome is a large ribonucleoprotein complex responsible for the synthesis of proteins in the cell. In Rattus norvegicus (Rat), this protein is Large ribosomal subunit protein uL15 (Rpl27a).